We begin with the raw amino-acid sequence, 427 residues long: uncharacterized protein (427 aa).

A coiled-coil region spans residues 135–168 (PILKQKLVSLESKVKKIDKEMEKHNDLLKEIQEN).

This is an uncharacterized protein from Arabidopsis thaliana (Mouse-ear cress).